A 556-amino-acid polypeptide reads, in one-letter code: Urocanate hydratase (556 aa).

NAD(+) contacts are provided by residues G52–G53, Q130, G176–G178, E196, R201, N242–A243, Q263–H267, Y273–L274, and Y322. C410 is an active-site residue. G492 contacts NAD(+).

It belongs to the urocanase family. NAD(+) is required as a cofactor.

The protein resides in the cytoplasm. It catalyses the reaction 4-imidazolone-5-propanoate = trans-urocanate + H2O. It functions in the pathway amino-acid degradation; L-histidine degradation into L-glutamate; N-formimidoyl-L-glutamate from L-histidine: step 2/3. Catalyzes the conversion of urocanate to 4-imidazolone-5-propionate. This is Urocanate hydratase from Shewanella piezotolerans (strain WP3 / JCM 13877).